We begin with the raw amino-acid sequence, 435 residues long: Trigger factor (435 aa).

Positions 163–248 constitute a PPIase FKBP-type domain; that stretch reads GDYVTFDFKG…IKEIKVKELP (86 aa).

The protein belongs to the FKBP-type PPIase family. Tig subfamily.

The protein resides in the cytoplasm. The catalysed reaction is [protein]-peptidylproline (omega=180) = [protein]-peptidylproline (omega=0). Its function is as follows. Involved in protein export. Acts as a chaperone by maintaining the newly synthesized protein in an open conformation. Functions as a peptidyl-prolyl cis-trans isomerase. In Geotalea daltonii (strain DSM 22248 / JCM 15807 / FRC-32) (Geobacter daltonii), this protein is Trigger factor.